Reading from the N-terminus, the 150-residue chain is Ribonuclease H (150 aa).

The region spanning 3–144 is the RNase H type-1 domain; sequence DKDMIEIWTD…ADGLARKGTD (142 aa). 4 residues coordinate Mg(2+): aspartate 12, glutamate 50, aspartate 72, and aspartate 136. The interval 129-150 is disordered; it reads DEGNERADGLARKGTDEVRGRK.

It belongs to the RNase H family. As to quaternary structure, monomer. Mg(2+) is required as a cofactor.

The protein resides in the cytoplasm. It catalyses the reaction Endonucleolytic cleavage to 5'-phosphomonoester.. In terms of biological role, endonuclease that specifically degrades the RNA of RNA-DNA hybrids. The chain is Ribonuclease H from Hyphomonas neptunium (strain ATCC 15444).